A 263-amino-acid polypeptide reads, in one-letter code: Protein YpjB (263 aa).

Over residues 233-244 (DFDDSSSEDDPV) the composition is skewed to acidic residues. The disordered stretch occupies residues 233–263 (DFDDSSSEDDPVENSPVVTSPVVSSSKSSFQ). Residues 245–263 (ENSPVVTSPVVSSSKSSFQ) show a composition bias toward low complexity.

The sequence is that of Protein YpjB (ypjB) from Escherichia coli (strain K12).